The following is a 910-amino-acid chain: DNA mismatch repair protein MutS (910 aa).

Over residues 1–11 (MEAKVEEKEPE) the composition is skewed to basic and acidic residues. Residues 1 to 21 (MEAKVEEKEPEPVENAGPDAP) form a disordered region. Residue 658-665 (GPNMGGKS) coordinates ATP.

It belongs to the DNA mismatch repair MutS family.

Its function is as follows. This protein is involved in the repair of mismatches in DNA. It is possible that it carries out the mismatch recognition step. This protein has a weak ATPase activity. This chain is DNA mismatch repair protein MutS, found in Brucella abortus (strain 2308).